We begin with the raw amino-acid sequence, 70 residues long: Large ribosomal subunit protein bL31 (70 aa).

Zn(2+)-binding residues include C16, C18, C37, and C40.

Belongs to the bacterial ribosomal protein bL31 family. Type A subfamily. In terms of assembly, part of the 50S ribosomal subunit. Zn(2+) is required as a cofactor.

Its function is as follows. Binds the 23S rRNA. The chain is Large ribosomal subunit protein bL31 from Haemophilus influenzae (strain PittEE).